Here is a 211-residue protein sequence, read N- to C-terminus: MYQPDFPTVPFRLGLYPVVDSVAWIERLLEAGVRTIQLRIKDKRDEEVEADVIAAIALGRRYNARLFINDYWRLAIKHRAYGVHLGQEDLETTDLKAIQAAGLRLGVSTHDDMEIDVALAAKPSYIALGHVFPTQTKQMPSAPQGLAQLASHIERLADYPTVAIGGISLERATAVLATGVGSIAVVSAITQAADWRAATAQLLDIAGVGDE.

Residues 37 to 41 (QLRIK) and Asn69 contribute to the 4-amino-2-methyl-5-(diphosphooxymethyl)pyrimidine site. Residues Asp70 and Asp89 each contribute to the Mg(2+) site. Position 108 (Ser108) interacts with 4-amino-2-methyl-5-(diphosphooxymethyl)pyrimidine. Residue 134–136 (TQT) participates in 2-[(2R,5Z)-2-carboxy-4-methylthiazol-5(2H)-ylidene]ethyl phosphate binding. Lys137 serves as a coordination point for 4-amino-2-methyl-5-(diphosphooxymethyl)pyrimidine. Residues Gly166 and 186–187 (VS) each bind 2-[(2R,5Z)-2-carboxy-4-methylthiazol-5(2H)-ylidene]ethyl phosphate.

It belongs to the thiamine-phosphate synthase family. The cofactor is Mg(2+).

The enzyme catalyses 2-[(2R,5Z)-2-carboxy-4-methylthiazol-5(2H)-ylidene]ethyl phosphate + 4-amino-2-methyl-5-(diphosphooxymethyl)pyrimidine + 2 H(+) = thiamine phosphate + CO2 + diphosphate. The catalysed reaction is 2-(2-carboxy-4-methylthiazol-5-yl)ethyl phosphate + 4-amino-2-methyl-5-(diphosphooxymethyl)pyrimidine + 2 H(+) = thiamine phosphate + CO2 + diphosphate. It carries out the reaction 4-methyl-5-(2-phosphooxyethyl)-thiazole + 4-amino-2-methyl-5-(diphosphooxymethyl)pyrimidine + H(+) = thiamine phosphate + diphosphate. It functions in the pathway cofactor biosynthesis; thiamine diphosphate biosynthesis; thiamine phosphate from 4-amino-2-methyl-5-diphosphomethylpyrimidine and 4-methyl-5-(2-phosphoethyl)-thiazole: step 1/1. In terms of biological role, condenses 4-methyl-5-(beta-hydroxyethyl)thiazole monophosphate (THZ-P) and 2-methyl-4-amino-5-hydroxymethyl pyrimidine pyrophosphate (HMP-PP) to form thiamine monophosphate (TMP). The chain is Thiamine-phosphate synthase from Salmonella dublin (strain CT_02021853).